Reading from the N-terminus, the 939-residue chain is Isoleucine--tRNA ligase (939 aa).

A 'HIGH' region motif is present at residues 59-69 (PYANGDIHIGH). Position 570 (E570) interacts with L-isoleucyl-5'-AMP. Residues 611–615 (KMSKS) carry the 'KMSKS' region motif. Residue K614 participates in ATP binding. Residues C902, C905, C922, and C925 each coordinate Zn(2+).

Belongs to the class-I aminoacyl-tRNA synthetase family. IleS type 1 subfamily. In terms of assembly, monomer. It depends on Zn(2+) as a cofactor.

It is found in the cytoplasm. The enzyme catalyses tRNA(Ile) + L-isoleucine + ATP = L-isoleucyl-tRNA(Ile) + AMP + diphosphate. Catalyzes the attachment of isoleucine to tRNA(Ile). As IleRS can inadvertently accommodate and process structurally similar amino acids such as valine, to avoid such errors it has two additional distinct tRNA(Ile)-dependent editing activities. One activity is designated as 'pretransfer' editing and involves the hydrolysis of activated Val-AMP. The other activity is designated 'posttransfer' editing and involves deacylation of mischarged Val-tRNA(Ile). The chain is Isoleucine--tRNA ligase from Nitrosomonas europaea (strain ATCC 19718 / CIP 103999 / KCTC 2705 / NBRC 14298).